A 107-amino-acid polypeptide reads, in one-letter code: Phosphoribosyl-ATP pyrophosphatase (107 aa).

Belongs to the PRA-PH family.

It is found in the cytoplasm. It catalyses the reaction 1-(5-phospho-beta-D-ribosyl)-ATP + H2O = 1-(5-phospho-beta-D-ribosyl)-5'-AMP + diphosphate + H(+). It participates in amino-acid biosynthesis; L-histidine biosynthesis; L-histidine from 5-phospho-alpha-D-ribose 1-diphosphate: step 2/9. The chain is Phosphoribosyl-ATP pyrophosphatase from Rhizobium johnstonii (strain DSM 114642 / LMG 32736 / 3841) (Rhizobium leguminosarum bv. viciae).